We begin with the raw amino-acid sequence, 213 residues long: Large ribosomal subunit protein uL1 (213 aa).

This sequence belongs to the universal ribosomal protein uL1 family. In terms of assembly, part of the 50S ribosomal subunit.

Its function is as follows. Binds directly to 23S rRNA. Probably involved in E site tRNA release. In terms of biological role, protein L1 is also a translational repressor protein, it controls the translation of its operon by binding to its mRNA. This chain is Large ribosomal subunit protein uL1, found in Methanococcus maripaludis (strain C6 / ATCC BAA-1332).